The following is a 65-amino-acid chain: Muscarinic toxin 3 (65 aa).

Cystine bridges form between Cys-3–Cys-24, Cys-17–Cys-42, Cys-46–Cys-57, and Cys-58–Cys-63.

It belongs to the three-finger toxin family. Short-chain subfamily. Aminergic toxin sub-subfamily. Expressed by the venom gland.

It localises to the secreted. Potent antagonist (IC(50)=1-10 nM) of M4 (CHRM4) muscarinic receptors, and CHRM1, ADRA1A, ADRA2A and ADRA2C adrenergic receptors. Also antagonises ADRA1B and ADRA1D adrenergic receptors with a 10-times lower affinity. This chain is Muscarinic toxin 3, found in Dendroaspis angusticeps (Eastern green mamba).